Here is a 515-residue protein sequence, read N- to C-terminus: Cytochrome P450 2D7 (515 aa).

The Extracellular segment spans residues 1–2 (MG). A helical transmembrane segment spans residues 3 to 23 (LEALVPLAMIVAIFLLLVDLM). Residues 24–301 (HRHQRWAARY…DENLRIVVGN (278 aa)) are Cytoplasmic-facing. A helical transmembrane segment spans residues 302 to 322 (LFLAGMVTTSTTLAWGLLLMI). Topologically, residues 323 to 515 (LHLDVQRGRR…SPYELCAVPR (193 aa)) are extracellular. The N-linked (GlcNAc...) asparagine glycan is linked to asparagine 416. Cysteine 461 is a heme binding site.

Belongs to the cytochrome P450 family. It depends on heme as a cofactor. Expressed in brain cortex (at protein level).

It localises to the membrane. Its subcellular location is the cytoplasm. It is found in the mitochondrion. The catalysed reaction is an organic molecule + reduced [NADPH--hemoprotein reductase] + O2 = an alcohol + oxidized [NADPH--hemoprotein reductase] + H2O + H(+). Functionally, may be responsible for the metabolism of many drugs and environmental chemicals that it oxidizes. It may be involved in the metabolism of codeine to morphine. However, another study could not confirm it. This Homo sapiens (Human) protein is Cytochrome P450 2D7.